The following is a 346-amino-acid chain: Biotin synthase (346 aa).

Residues 38–256 (QQVQVSTLLS…IAVARIMMPT (219 aa)) enclose the Radical SAM core domain. [4Fe-4S] cluster-binding residues include Cys53, Cys57, and Cys60. Residues Cys97, Cys128, Cys188, and Arg260 each coordinate [2Fe-2S] cluster.

This sequence belongs to the radical SAM superfamily. Biotin synthase family. In terms of assembly, homodimer. [4Fe-4S] cluster is required as a cofactor. It depends on [2Fe-2S] cluster as a cofactor.

It catalyses the reaction (4R,5S)-dethiobiotin + (sulfur carrier)-SH + 2 reduced [2Fe-2S]-[ferredoxin] + 2 S-adenosyl-L-methionine = (sulfur carrier)-H + biotin + 2 5'-deoxyadenosine + 2 L-methionine + 2 oxidized [2Fe-2S]-[ferredoxin]. It functions in the pathway cofactor biosynthesis; biotin biosynthesis; biotin from 7,8-diaminononanoate: step 2/2. Its function is as follows. Catalyzes the conversion of dethiobiotin (DTB) to biotin by the insertion of a sulfur atom into dethiobiotin via a radical-based mechanism. The protein is Biotin synthase of Salmonella newport (strain SL254).